The following is a 310-amino-acid chain: Quinolinate synthase (310 aa).

His-27 and Ser-44 together coordinate iminosuccinate. Cys-89 serves as a coordination point for [4Fe-4S] cluster. Iminosuccinate contacts are provided by residues 115 to 117 (YVN) and Ser-132. [4Fe-4S] cluster is bound at residue Cys-175. Iminosuccinate contacts are provided by residues 201–203 (HPE) and Thr-222. Position 267 (Cys-267) interacts with [4Fe-4S] cluster.

The protein belongs to the quinolinate synthase family. Type 2 subfamily. [4Fe-4S] cluster is required as a cofactor.

Its subcellular location is the cytoplasm. The catalysed reaction is iminosuccinate + dihydroxyacetone phosphate = quinolinate + phosphate + 2 H2O + H(+). It participates in cofactor biosynthesis; NAD(+) biosynthesis; quinolinate from iminoaspartate: step 1/1. Catalyzes the condensation of iminoaspartate with dihydroxyacetone phosphate to form quinolinate. This is Quinolinate synthase from Thermus thermophilus (strain ATCC 27634 / DSM 579 / HB8).